The sequence spans 343 residues: MTITPQEALQRTIEHREIFHDEMLHLMRLIMRGDMSPVMAAAIITGLRVKKETIGEIAAAATVMREFAHHVEVPDNSNFVDIVGTGGDGAHTFNISTASMFVTAAAGAKVAKHGNRGVSSKSGSADVLEALGVNIDLQPDQVAASIAETGMGFMFAPNHHPAMKNIAAVRRELGVRTIFNILGPLTNPAGAPNQLMGVFHADLVGIQVRVMQRLGAQHVLVVYGKDGMDEVSLGAATLVGELRDGQVHEYEIHPEDFGLQMVSNRTLKVENADESRVMLLGALDNQPGVAREIVTLNAGTALYAANVAASIADGIQLAREAIASGKARAKVDELVRFTQQFKR.

5-phospho-alpha-D-ribose 1-diphosphate contacts are provided by residues Gly84, 87–88, Thr92, 94–97, 112–120, and Ser124; these read GD, NIST, and KHGNRGVSS. Gly84 provides a ligand contact to anthranilate. Ser96 contacts Mg(2+). Anthranilate is bound at residue Asn115. Anthranilate is bound at residue Arg170. The Mg(2+) site is built by Asp229 and Glu230.

This sequence belongs to the anthranilate phosphoribosyltransferase family. In terms of assembly, homodimer. It depends on Mg(2+) as a cofactor.

The catalysed reaction is N-(5-phospho-beta-D-ribosyl)anthranilate + diphosphate = 5-phospho-alpha-D-ribose 1-diphosphate + anthranilate. It functions in the pathway amino-acid biosynthesis; L-tryptophan biosynthesis; L-tryptophan from chorismate: step 2/5. Functionally, catalyzes the transfer of the phosphoribosyl group of 5-phosphorylribose-1-pyrophosphate (PRPP) to anthranilate to yield N-(5'-phosphoribosyl)-anthranilate (PRA). This chain is Anthranilate phosphoribosyltransferase, found in Burkholderia vietnamiensis (strain G4 / LMG 22486) (Burkholderia cepacia (strain R1808)).